A 273-amino-acid chain; its full sequence is 2,3,4,5-tetrahydropyridine-2,6-dicarboxylate N-succinyltransferase (273 aa).

Belongs to the transferase hexapeptide repeat family.

The protein resides in the cytoplasm. The enzyme catalyses (S)-2,3,4,5-tetrahydrodipicolinate + succinyl-CoA + H2O = (S)-2-succinylamino-6-oxoheptanedioate + CoA. Its pathway is amino-acid biosynthesis; L-lysine biosynthesis via DAP pathway; LL-2,6-diaminopimelate from (S)-tetrahydrodipicolinate (succinylase route): step 1/3. This is 2,3,4,5-tetrahydropyridine-2,6-dicarboxylate N-succinyltransferase from Acinetobacter baumannii (strain SDF).